A 407-amino-acid polypeptide reads, in one-letter code: Arginine deiminase (407 aa).

Residue Cys-397 is the Amidino-cysteine intermediate of the active site.

It belongs to the arginine deiminase family.

It localises to the cytoplasm. It carries out the reaction L-arginine + H2O = L-citrulline + NH4(+). The protein operates within amino-acid degradation; L-arginine degradation via ADI pathway; carbamoyl phosphate from L-arginine: step 1/2. This chain is Arginine deiminase (arcA), found in Escherichia coli O6:H1 (strain CFT073 / ATCC 700928 / UPEC).